The chain runs to 496 residues: Glutamyl-tRNA(Gln) amidotransferase subunit A (496 aa).

Active-site charge relay system residues include lysine 75 and serine 150. Serine 174 serves as the catalytic Acyl-ester intermediate.

The protein belongs to the amidase family. GatA subfamily. Heterotrimer of A, B and C subunits.

The enzyme catalyses L-glutamyl-tRNA(Gln) + L-glutamine + ATP + H2O = L-glutaminyl-tRNA(Gln) + L-glutamate + ADP + phosphate + H(+). In terms of biological role, allows the formation of correctly charged Gln-tRNA(Gln) through the transamidation of misacylated Glu-tRNA(Gln) in organisms which lack glutaminyl-tRNA synthetase. The reaction takes place in the presence of glutamine and ATP through an activated gamma-phospho-Glu-tRNA(Gln). The protein is Glutamyl-tRNA(Gln) amidotransferase subunit A of Burkholderia thailandensis (strain ATCC 700388 / DSM 13276 / CCUG 48851 / CIP 106301 / E264).